The chain runs to 84 residues: Control protein C.SmaI (84 aa).

The region spanning V19–L73 is the HTH cro/C1-type domain. Positions Q30 to R49 form a DNA-binding region, H-T-H motif.

May control expression of its associated restriction-modification system SmaI. In Serratia marcescens, this protein is Control protein C.SmaI.